The following is a 243-amino-acid chain: Probable transcriptional regulatory protein TTE1135 (243 aa).

It belongs to the TACO1 family.

Its subcellular location is the cytoplasm. This chain is Probable transcriptional regulatory protein TTE1135, found in Caldanaerobacter subterraneus subsp. tengcongensis (strain DSM 15242 / JCM 11007 / NBRC 100824 / MB4) (Thermoanaerobacter tengcongensis).